Consider the following 333-residue polypeptide: MEHDGYHLPVMVSEVTDLLARRPGIYIDGTLGGGGHAFSVMSALRRSGFENDSLLIGIDQDSFALEEAAGRLRPFASRVRLERGNFSEMAAIIERIRLREGCRLPVMGILLDLGVSSFQIDTPDRGFSYLRQGPLDMRMDPDGGWSAADIVNTAEESELAGIIYRYGEEKKSRAIARAIKARVREKGDFRETAELAAVVRSVVAGHDRQIKSLSRVFQALRIAVNDELGVLESALEDGTACLAPSGRMGVMSYHSLEDRMVKRFFRDKSEDDWGPKGVGLREPLRSAGFKLVTRKSVVASDDEVRINPRARSARLRVIEKKELEGESHDRVYQ.

S-adenosyl-L-methionine-binding positions include 34-36 (GGH), aspartate 59, phenylalanine 86, aspartate 112, and glutamine 119.

It belongs to the methyltransferase superfamily. RsmH family.

The protein localises to the cytoplasm. The enzyme catalyses cytidine(1402) in 16S rRNA + S-adenosyl-L-methionine = N(4)-methylcytidine(1402) in 16S rRNA + S-adenosyl-L-homocysteine + H(+). Specifically methylates the N4 position of cytidine in position 1402 (C1402) of 16S rRNA. The polypeptide is Ribosomal RNA small subunit methyltransferase H (Prosthecochloris aestuarii (strain DSM 271 / SK 413)).